The following is a 315-amino-acid chain: Mitochondrial outer membrane import complex protein METAXIN (315 aa).

Methionine 1 is subject to N-acetylmethionine. Residues 157-181 are a coiled coil; it reads ENAEQREKQIYKRASEAYEALSTRL. The helical transmembrane segment at 195–215 threads the bilayer; it reads LDAFLLSHILFIIQALPVTSV. The segment at 240–277 is disordered; it reads ASSSSPSPPLHSFPSSFPRKSSKPKSKPKVEKTEEEKK. Over residues 267 to 277 the composition is skewed to basic and acidic residues; that stretch reads PKVEKTEEEKK. A helical membrane pass occupies residues 284 to 304; it reads FFLAAQFLAVVIYVSVMGGGS.

It belongs to the metaxin family. Part of a high molecular weight complex that is distinct from the TOM complex. Interacts with a variety of mitochondrial precursor proteins. In terms of tissue distribution, expressed in roots, young cotyledons, flowers and leaves.

It localises to the mitochondrion inner membrane. The protein resides in the mitochondrion outer membrane. Involved in transport of proteins into the mitochondrion. The chain is Mitochondrial outer membrane import complex protein METAXIN (MTX1) from Arabidopsis thaliana (Mouse-ear cress).